The primary structure comprises 272 residues: Shikimate dehydrogenase (NADP(+)) (272 aa).

Shikimate is bound by residues 14 to 16 (SKS) and T61. K65 acts as the Proton acceptor in catalysis. Residue E77 coordinates NADP(+). Shikimate-binding residues include N86 and D102. NADP(+)-binding positions include 126 to 130 (GAGGA), 149 to 154 (NRTASR), and M213. Y215 provides a ligand contact to shikimate. G237 is an NADP(+) binding site.

The protein belongs to the shikimate dehydrogenase family. In terms of assembly, homodimer.

The catalysed reaction is shikimate + NADP(+) = 3-dehydroshikimate + NADPH + H(+). The protein operates within metabolic intermediate biosynthesis; chorismate biosynthesis; chorismate from D-erythrose 4-phosphate and phosphoenolpyruvate: step 4/7. Involved in the biosynthesis of the chorismate, which leads to the biosynthesis of aromatic amino acids. Catalyzes the reversible NADPH linked reduction of 3-dehydroshikimate (DHSA) to yield shikimate (SA). The polypeptide is Shikimate dehydrogenase (NADP(+)) (Salmonella schwarzengrund (strain CVM19633)).